Consider the following 247-residue polypeptide: EGF-like domain-containing protein C02B10.3 (247 aa).

A signal peptide spans 1 to 17 (MTGALCIVLFGVTMVTA). Topologically, residues 18-220 (ERPKIKDTHG…LCDKRCQKGH (203 aa)) are extracellular. EGF-like domains follow at residues 114–150 (FGTS…RFCE) and 180–213 (SGAS…DLCD). 4 disulfides stabilise this stretch: C123-C138, C140-C149, C190-C201, and C203-C212. The N-linked (GlcNAc...) asparagine glycan is linked to N126. A helical membrane pass occupies residues 221–240 (VTCSTCSSFIPAALFAIILL). Residues 241-247 (CVNKFNY) lie on the Cytoplasmic side of the membrane.

The protein resides in the membrane. This Caenorhabditis elegans protein is EGF-like domain-containing protein C02B10.3.